A 482-amino-acid polypeptide reads, in one-letter code: Serine carboxypeptidase-like 36 (482 aa).

An N-terminal signal peptide occupies residues 1-25 (MGKRQDWSVTACIFLFLSLASQIHC). Cystine bridges form between Cys119-Cys363, Cys275-Cys286, and Cys310-Cys331. The active site involves Ser210. The N-linked (GlcNAc...) asparagine glycan is linked to Asn228. N-linked (GlcNAc...) asparagine glycans are attached at residues Asn312 and Asn352. Residue Asp402 is part of the active site. Asn418 and Asn444 each carry an N-linked (GlcNAc...) asparagine glycan. The active site involves His455.

The protein belongs to the peptidase S10 family. As to expression, expressed in seedlings, flowers and siliques.

It is found in the secreted. In terms of biological role, probable carboxypeptidase. The protein is Serine carboxypeptidase-like 36 (SCPL36) of Arabidopsis thaliana (Mouse-ear cress).